Consider the following 162-residue polypeptide: UPF0254 protein MTH1148 homolog (162 aa).

This sequence belongs to the UPF0254 family.

This chain is UPF0254 protein MTH1148 homolog, found in Methanothermobacter thermautotrophicus (strain Winter) (Methanobacterium thermoautotrophicum).